The following is a 1577-amino-acid chain: Disco-interacting protein 2 homolog B-A (1577 aa).

The 118-residue stretch at aspartate 7 to phenylalanine 124 folds into the DMAP1-binding domain. Disordered regions lie at residues glutamate 109 to arginine 148, valine 173 to threonine 204, aspartate 217 to serine 239, and serine 253 to arginine 273. Residues phenylalanine 124–alanine 140 are compositionally biased toward polar residues. Positions serine 176–serine 187 are enriched in low complexity. The segment covering aspartate 217–aspartate 236 has biased composition (polar residues).

The protein belongs to the DIP2 family.

Its subcellular location is the cell projection. It is found in the dendrite. The protein localises to the axon. The protein resides in the perikaryon. In terms of biological role, negatively regulates axonal outgrowth and is essential for normal synaptic transmission. Not required for regulation of axon polarity. Promotes acetylation of alpha-tubulin. This is Disco-interacting protein 2 homolog B-A (dip2ba) from Danio rerio (Zebrafish).